Reading from the N-terminus, the 273-residue chain is 2,3,4,5-tetrahydropyridine-2,6-dicarboxylate N-succinyltransferase (273 aa).

Arg106 and Asp143 together coordinate substrate.

The protein belongs to the transferase hexapeptide repeat family. As to quaternary structure, homotrimer.

Its subcellular location is the cytoplasm. It carries out the reaction (S)-2,3,4,5-tetrahydrodipicolinate + succinyl-CoA + H2O = (S)-2-succinylamino-6-oxoheptanedioate + CoA. It participates in amino-acid biosynthesis; L-lysine biosynthesis via DAP pathway; LL-2,6-diaminopimelate from (S)-tetrahydrodipicolinate (succinylase route): step 1/3. This is 2,3,4,5-tetrahydropyridine-2,6-dicarboxylate N-succinyltransferase from Wolbachia pipientis wMel.